Here is a 364-residue protein sequence, read N- to C-terminus: Beta-parvin (364 aa).

Positions 1 to 57 (MSSAPRSPTPRPRRMKKDESFLGKLGGTLARKRRAREVSDLQEEGKNAINSPMSPAL) are disordered. At Ser7 the chain carries Phosphoserine. Positions 36–46 (REVSDLQEEGK) are enriched in basic and acidic residues. Ser54 carries the post-translational modification Phosphoserine. Calponin-homology (CH) domains lie at 87–194 (KELV…MHFR) and 254–361 (SVVK…TKYK).

The protein belongs to the parvin family. Interacts with DYSF. Interacts with ILK, ARHGEF6, PXN (via LD motifs), ACTN2 and actin. Expressed predominantly in heart and skeletal muscle.

The protein localises to the cell junction. It is found in the focal adhesion. The protein resides in the cell membrane. It localises to the cytoplasm. Its subcellular location is the cytoskeleton. The protein localises to the cell projection. It is found in the lamellipodium. The protein resides in the myofibril. It localises to the sarcomere. Its subcellular location is the z line. Adapter protein that plays a role in integrin signaling via ILK and in activation of the GTPases CDC42 and RAC1 by guanine exchange factors, such as ARHGEF6. Is involved in the reorganization of the actin cytoskeleton and formation of lamellipodia. Plays a role in cell adhesion, cell spreading, establishment or maintenance of cell polarity, and cell migration. This chain is Beta-parvin (PARVB), found in Homo sapiens (Human).